The chain runs to 468 residues: 6-phosphogluconate dehydrogenase, NAD(+)-dependent, decarboxylating (468 aa).

Residues 9–14, 32–34, 73–75, and Asn-101 contribute to the NAD(+) site; these read GLGVMG, NYT, and VTA. Substrate is bound by residues Asn-101 and 127–129; that span reads SGG. Lys-181 (proton acceptor) is an active-site residue. 184 to 185 contacts substrate; the sequence is HN. The active-site Proton donor is Glu-188. 5 residues coordinate substrate: Tyr-189, Lys-259, Arg-286, Arg-445, and His-451.

Belongs to the 6-phosphogluconate dehydrogenase family. As to quaternary structure, homodimer.

It catalyses the reaction 6-phospho-D-gluconate + NAD(+) = D-ribulose 5-phosphate + CO2 + NADH. Catalyzes the oxidative decarboxylation of 6-phosphogluconate to ribulose 5-phosphate and CO(2), with concomitant reduction of NAD to NADH. Does not contribute to oxidative pentose phosphate (PP) pathway fluxes during growth on glucose. The functional role of GntZ remains obscure. The protein is 6-phosphogluconate dehydrogenase, NAD(+)-dependent, decarboxylating (gntZ) of Bacillus subtilis (strain 168).